Here is a 277-residue protein sequence, read N- to C-terminus: Large ribosomal subunit protein uL2 (277 aa).

A disordered region spans residues 225–277 (MNPIDHPHGGGEGKTAAGRHPVSPWGTPSKGFRTRVNKRTDGMIVRRRYSNKG).

The protein belongs to the universal ribosomal protein uL2 family. As to quaternary structure, part of the 50S ribosomal subunit. Forms a bridge to the 30S subunit in the 70S ribosome.

Functionally, one of the primary rRNA binding proteins. Required for association of the 30S and 50S subunits to form the 70S ribosome, for tRNA binding and peptide bond formation. It has been suggested to have peptidyltransferase activity; this is somewhat controversial. Makes several contacts with the 16S rRNA in the 70S ribosome. The chain is Large ribosomal subunit protein uL2 from Nitrosospira multiformis (strain ATCC 25196 / NCIMB 11849 / C 71).